Here is a 133-residue protein sequence, read N- to C-terminus: UPF0225 protein BPP1723 (133 aa).

It belongs to the UPF0225 family.

The chain is UPF0225 protein BPP1723 from Bordetella parapertussis (strain 12822 / ATCC BAA-587 / NCTC 13253).